The following is a 372-amino-acid chain: Alpha-parvin (372 aa).

Residues 1–11 (MATSPQKSPSV) show a composition bias toward low complexity. Positions 1–45 (MATSPQKSPSVPKSPTPKSPPSRKKDDSFLGKLGGTLARRKKAKE) are disordered. Residue alanine 2 is modified to N-acetylalanine. A phosphoserine mark is found at serine 8, serine 14, and serine 19. An interaction with ARHGAP31 region spans residues 21–25 (PSRKK). 2 positions are modified to phosphoserine: serine 28 and serine 62. 2 Calponin-homology (CH) domains span residues 95-202 (QELM…QYFR) and 262-369 (NVVK…TKYR). Residues 223-372 (GILQSRQIQE…NLFTKYRNVE (150 aa)) form a required for interaction with TESK1 and ILK region.

It belongs to the parvin family. Component of the heterotrimeric IPP (ILK-PINCH-PARVIN) complex composed of ILK, LIMS1/PINCH and PARVA; the complex binds to F-actin via the C-terminal tail of LIMS1 and the N-terminal region of PARVA, promoting F-actin filament bundling. Formation of the IPP complex is dependent on protein kinase C and precedes integrin-mediated cell adhesion and spreading. Interacts with TGFB1I1. Interacts with ARHGAP31. Interacts with the actin cytoskeleton. Interacts (via C-terminus) with TESK1 (via C-terminus); the interaction inhibits TESK1 kinase activity. Interacts with PXN/PAXILLIN (via LD motif 4). In terms of tissue distribution, widely expressed, with highest levels in heart, skeletal muscle, kidney and liver.

Its subcellular location is the cell junction. The protein resides in the focal adhesion. The protein localises to the cell membrane. It localises to the cytoplasm. It is found in the cytoskeleton. Its subcellular location is the myofibril. The protein resides in the sarcomere. The protein localises to the z line. Functionally, plays a role in sarcomere organization and in smooth muscle cell contraction. Required for normal development of the embryonic cardiovascular system, and for normal septation of the heart outflow tract. Plays a role in sprouting angiogenesis and is required for normal adhesion of vascular smooth muscle cells to endothelial cells during blood vessel development. Plays a role in the reorganization of the actin cytoskeleton, formation of lamellipodia and ciliogenesis. Plays a role in the establishment of cell polarity, cell adhesion, cell spreading, and directed cell migration. Within the IPP (ILK-PINCH-PARVIN) complex, binds to F-actin, promoting F-actin bundling, a process required to generate force for actin cytoskeleton reorganization and subsequent dynamic cell adhesion events such as cell spreading and migration. This Homo sapiens (Human) protein is Alpha-parvin (PARVA).